We begin with the raw amino-acid sequence, 480 residues long: REST corepressor 1 (480 aa).

Residues 1 to 105 (MPAMVEKGPE…GGGMRVGPQY (105 aa)) form a disordered region. Low complexity-rich tracts occupy residues 21 to 58 (AASAASAAASAASAAASAAASAGTASASAAAAASAAAA) and 66 to 89 (SLAAAAPNGNSGSNSWEEGSSGSS). The interaction with HDAC1 stretch occupies residues 72-251 (PNGNSGSNSW…RHARKQKRER (180 aa)). In terms of domain architecture, ELM2 spans 97–183 (GGMRVGPQYQ…KSLADLPNFT (87 aa)). Residue Lys-116 forms a Glycyl lysine isopeptide (Lys-Gly) (interchain with G-Cter in SUMO2) linkage. Phosphoserine is present on Ser-121. Residues 184–235 (PFPDEWTVEDKVLFEQAFSFHGKTFHRIQQMLPDKSIASLVKFYYSWKKTRT) enclose the SANT 1 domain. Residues 238 to 265 (SVMDRHARKQKREREESEDELEETNGSN) adopt a coiled-coil conformation. The disordered stretch occupies residues 238 to 308 (SVMDRHARKQ…AKNRAKRKPP (71 aa)). Phosphoserine is present on Ser-254. A compositionally biased stretch (basic and acidic residues) spans 272–282 (DPNKESKKEVP). An interaction with KDM1A region spans residues 290–378 (VKKEKHSTQA…LPEVIQKCNA (89 aa)). Lys-291 participates in a covalent cross-link: Glycyl lysine isopeptide (Lys-Gly) (interchain with G-Cter in SUMO2). Residues 328–363 (ATTVLRQLDMELVSIKRQIQNIKQTNSALKEKLDGG) adopt a coiled-coil conformation. Residues 375 to 426 (KCNARWTTEEQLLAVQAIRKYGRDFQAISDVIGNKSVVQVKNFFVNYRRRFN) enclose the SANT 2 domain. A disordered region spans residues 436–466 (AEHGKDETNGPANQKPVKSPESSIKIPEEED). Residue Ser-454 is modified to Phosphoserine. Residue Lys-460 forms a Glycyl lysine isopeptide (Lys-Gly) (interchain with G-Cter in SUMO2) linkage.

It belongs to the CoREST family. Component of a BHC histone deacetylase complex that contains HDAC1, HDAC2, HMG20B/BRAF35, KDM1A, RCOR1/CoREST and PHF21A/BHC80. The BHC complex may also contain ZMYM2, ZNF217, ZMYM3, GSE1 and GTF2I. Interacts with REST. Interacts with the SMARCE1/BAF57, suggesting that the BHC complex may recruit the ATP-dependent chromatin-remodeling SWI-SNF complex. Interacts directly with GFI1 and GFI1B in a RCOR/GFI/KDM1A/HDAC complex. Interacts with INMS1. Interacts with SOX2. In terms of tissue distribution, expressed in the external germinal layer (EGL) and internal granular layer (IGL) of the cerebellum and in Purkinje cells (at protein level).

The protein resides in the nucleus. Functionally, essential component of the BHC complex, a corepressor complex that represses transcription of neuron-specific genes in non-neuronal cells. The BHC complex is recruited at RE1/NRSE sites by REST and acts by deacetylating and demethylating specific sites on histones, thereby acting as a chromatin modifier. In the BHC complex, it serves as a molecular beacon for the recruitment of molecular machinery, including MeCP2 and SUV39H1, that imposes silencing across a chromosomal interval. Plays a central role in demethylation of Lys-4 of histone H3 by promoting demethylase activity of KDM1A on core histones and nucleosomal substrates. It also protects KDM1A from the proteasome. Component of a RCOR/GFI/KDM1A/HDAC complex that suppresses, via histone deacetylase (HDAC) recruitment, a number of genes implicated in multilineage blood cell development and controls hematopoietic differentiation. In Mus musculus (Mouse), this protein is REST corepressor 1 (Rcor1).